A 158-amino-acid polypeptide reads, in one-letter code: Transcriptional repressor NrdR (158 aa).

Residues 3–34 (CPFCNSEETRVIDTRLTDDGHVVRRRRECEHC) fold into a zinc finger. An ATP-cone domain is found at 49 to 139 (IFVVKKGGQR…VYKEFRDLDH (91 aa)).

The protein belongs to the NrdR family. Zn(2+) serves as cofactor.

In terms of biological role, negatively regulates transcription of bacterial ribonucleotide reductase nrd genes and operons by binding to NrdR-boxes. This is Transcriptional repressor NrdR from Kosmotoga olearia (strain ATCC BAA-1733 / DSM 21960 / TBF 19.5.1).